Consider the following 279-residue polypeptide: Phage-like element PBSX protein XepA (279 aa).

The protein to B.subtilis YqxG/YqdC.

In terms of biological role, not known; does not seem to be involved in host cell lysis. This Bacillus subtilis (strain 168) protein is Phage-like element PBSX protein XepA (xepA).